The primary structure comprises 238 residues: Orotidine 5'-phosphate decarboxylase (238 aa).

Substrate is bound by residues Asp-18, Lys-40, 67-76 (DMKLLDIDNT), Thr-122, Arg-183, Gln-192, and Arg-213. The active-site Proton donor is the Lys-69.

It belongs to the OMP decarboxylase family. Type 1 subfamily. Homodimer.

The enzyme catalyses orotidine 5'-phosphate + H(+) = UMP + CO2. It participates in pyrimidine metabolism; UMP biosynthesis via de novo pathway; UMP from orotate: step 2/2. Functionally, catalyzes the decarboxylation of orotidine 5'-monophosphate (OMP) to uridine 5'-monophosphate (UMP). The protein is Orotidine 5'-phosphate decarboxylase of Brucella abortus (strain S19).